The primary structure comprises 771 residues: Receptor like protein 22 (771 aa).

Residues 1–20 (MSNLRLRLLSLVSILYCIAA) form the signal peptide. The Extracellular segment spans residues 21–729 (LRCRPDQTET…EEEEILEWRA (709 aa)). 6 N-linked (GlcNAc...) asparagine glycosylation sites follow: Asn-46, Asn-58, Asn-80, Asn-93, Asn-134, and Asn-158. LRR repeat units lie at residues 86 to 110 (LSHL…AFGQ), 112 to 135 (NNLE…IRNL), 136 to 159 (TKLT…VQNL), 160 to 183 (TKLL…FFTM), 185 to 206 (FLSY…SNSS), 207 to 230 (SKLE…VLRL), 232 to 254 (NLRY…IFSP), 255 to 281 (LQSL…DFPK), 283 to 303 (MEIL…LKSL), 304 to 327 (KKLW…IWSL), 329 to 350 (LLVS…LDHV), and 353 to 377 (NSSV…PVSI). Asn-204 is a glycosylation site (N-linked (GlcNAc...) asparagine). Residue Asn-242 is glycosylated (N-linked (GlcNAc...) asparagine). A glycan (N-linked (GlcNAc...) asparagine) is linked at Asn-292. Asn-337, Asn-344, Asn-353, Asn-379, Asn-384, Asn-397, Asn-410, Asn-421, Asn-466, and Asn-481 each carry an N-linked (GlcNAc...) asparagine glycan. One copy of the LRR 13; degenerate repeat lies at 378 to 397 (INLSAWNNSFTGDIPLSVCN). LRR repeat units follow at residues 398-419 (RTSL…PPCM), 420-443 (GNFT…FYSG), 445-467 (LTQT…LLNC), 469-491 (FIRF…LKAL), 492-516 (PNLK…DQSS), 519-543 (FPKL…YFAN), 588-612 (LTFY…IGLL), 613-636 (KTLI…FANV), 637-660 (TELE…LGRL), and 662-685 (YLAY…QIIG). A glycan (N-linked (GlcNAc...) asparagine) is linked at Asn-543. 3 N-linked (GlcNAc...) asparagine glycosylation sites follow: Asn-619, Asn-622, and Asn-635. Residues 730 to 750 (AAIGYGPGVLFGLAIGHVVAL) traverse the membrane as a helical segment. Over 751-771 (YKPGWFIKNNGQNRLRGIRHP) the chain is Cytoplasmic.

The protein belongs to the RLP family.

The protein localises to the cell membrane. In Arabidopsis thaliana (Mouse-ear cress), this protein is Receptor like protein 22.